The following is a 404-amino-acid chain: MAAGTAVGAWVLVLSLWGAVVGAQNITARIGEPLVLKCKGAPKKPPQRLEWKLNTGRTEAWKVLSPQGGGPWDSVARVLPNGSLFLPAVGIQDEGIFRCQAMNRNGKETKSNYRVRVYQIPGKPEIVDSASELTAGVPNKVGTCVSEGSYPAGTLSWHLDGKPLVPNEKGVSVKEQTRRHPETGLFTLQSELMVTPARGGDPRPTFSCSFSPGLPRHRALRTAPIQPRVWEPVPLEEVQLVVEPEGGAVAPGGTVTLTCEVPAQPSPQIHWMKDGVPLPLPPSPVLILPEIGPQDQGTYSCVATHSSHGPQESRAVSISIIEPGEEGPTAGSVGGSGLGTLALALGILGGLGTAALLIGVILWQRRQRRGEERKAPENQEEEEERAELNQSEEPEAGESSTGGP.

Residues 1-22 form the signal peptide; the sequence is MAAGTAVGAWVLVLSLWGAVVG. An Ig-like V-type domain is found at 23–116; sequence AQNITARIGE…KETKSNYRVR (94 aa). Over 23-342 the chain is Extracellular; sequence AQNITARIGE…VGGSGLGTLA (320 aa). 2 N-linked (GlcNAc...) asparagine glycosylation sites follow: N25 and N81. 2 cysteine pairs are disulfide-bonded: C38–C99 and C144–C208. Ig-like C2-type domains follow at residues 124–221 and 227–317; these read PEIV…RALR and PRVW…RAVS. A helical membrane pass occupies residues 343 to 363; that stretch reads LALGILGGLGTAALLIGVILW. Residues 364–404 lie on the Cytoplasmic side of the membrane; that stretch reads QRRQRRGEERKAPENQEEEEERAELNQSEEPEAGESSTGGP. The tract at residues 367 to 404 is disordered; it reads QRRGEERKAPENQEEEEERAELNQSEEPEAGESSTGGP. Acidic residues predominate over residues 378–396; it reads NQEEEEERAELNQSEEPEA. S391 is subject to Phosphoserine; by PKC/PRKCZ and ATM.

Constitutive homodimer; disulfide-linked. Forms homooligomers. Interacts with S100A1 and APP. Interacts with S100B, S100A12 and S100A14. Interacts with TIRAP. Interacts with HMGB1. Interacts with LGP2; this interaction plays an important role in AGER-mediated pro-inflammatory responses and cytokine release. Interacts with double-strand break repair protein MRE11 which is a core component of the MRN complex. The interaction enhances MRE11 endonuclease activity and promotes DNA repair. Interacts with the MCM2-7 complex via interaction with complex member MCM2; the interaction is increased following DNA replication stress and stabilizes the MCM2-7 complex at replication forks. Interacts with longistatin, a protein from the saliva of the tick, Haemaphysalis longicornis; the interaction attenuates AGER-mediated production of reactive oxygen species (ROS), activation of NF-kappa-B and expression of adhesion molecules and cytokines in human endothelial cells. Post-translationally, phosphorylated on its cytoplasmic domain by PKCzeta/PRKCZ upon ligand binding. Phosphorylated by ATM following DNA damage. Targeted by the ubiquitin E3 ligase subunit FBXO10 to mediate its ubiquitination and degradation. As to expression, endothelial cells. Increased expression in pre-term labor and preeclampsia placentas compared to controls.

The protein localises to the cell membrane. It localises to the cell projection. The protein resides in the phagocytic cup. It is found in the early endosome. Its subcellular location is the nucleus. The protein localises to the secreted. Cell surface pattern recognition receptor that senses endogenous stress signals with a broad ligand repertoire including advanced glycation end products, S100 proteins, high-mobility group box 1 protein/HMGB1, amyloid beta/APP oligomers, nucleic acids, histones, phospholipids and glycosaminoglycans. Advanced glycosylation end products are nonenzymatically glycosylated proteins which accumulate in vascular tissue in aging and at an accelerated rate in diabetes. These ligands accumulate at inflammatory sites during the pathogenesis of various diseases including diabetes, vascular complications, neurodegenerative disorders and cancers, and RAGE transduces their binding into pro-inflammatory responses. Upon ligand binding, uses TIRAP and MYD88 as adapters to transduce the signal ultimately leading to the induction of inflammatory cytokines IL6, IL8 and TNFalpha through activation of NF-kappa-B. Interaction with S100A12 on endothelium, mononuclear phagocytes, and lymphocytes triggers cellular activation, with generation of key pro-inflammatory mediators. Interaction with S100B after myocardial infarction may play a role in myocyte apoptosis by activating ERK1/2 and p53/TP53 signaling. Contributes to the translocation of amyloid-beta peptide (ABPP) across the cell membrane from the extracellular to the intracellular space in cortical neurons. ABPP-initiated RAGE signaling, especially stimulation of p38 mitogen-activated protein kinase (MAPK), has the capacity to drive a transport system delivering ABPP as a complex with RAGE to the intraneuronal space. Participates in endothelial albumin transcytosis together with HMGB1 through the RAGE/SRC/Caveolin-1 pathway, leading to endothelial hyperpermeability. Mediates the loading of HMGB1 in extracellular vesicles (EVs) that shuttle HMGB1 to hepatocytes by transferrin-mediated endocytosis and subsequently promote hepatocyte pyroptosis by activating the NLRP3 inflammasome. Binds to DNA and promotes extracellular hypomethylated DNA (CpG DNA) uptake by cells via the endosomal route to activate inflammatory responses. Mediates phagocytosis by non-professional phagocytes (NPP) and this is enhanced by binding to ligands including RNA, DNA, HMGB1 and histones. Promotes NPP-mediated phagocytosis of Saccharomyces cerevisiae spores by binding to RNA attached to the spore wall. Also promotes NPP-mediated phagocytosis of apoptotic cells. Following DNA damage, recruited to DNA double-strand break sites where it colocalizes with the MRN repair complex via interaction with double-strand break repair protein MRE11. Enhances the endonuclease activity of MRE11, promoting the end resection of damaged DNA. Promotes DNA damage repair in trophoblasts which enhances trophoblast invasion and contributes to placental development and maintenance. Protects cells from DNA replication stress by localizing to damaged replication forks where it stabilizes the MCM2-7 complex and promotes faithful progression of the replication fork. Mediates the production of reactive oxygen species (ROS) in human endothelial cells. In Homo sapiens (Human), this protein is Advanced glycosylation end product-specific receptor (AGER).